A 288-amino-acid polypeptide reads, in one-letter code: ATP synthase subunit a (288 aa).

Transmembrane regions (helical) follow at residues 47–67 (LDSM…FWLV), 104–124 (LIAP…LMDL), 157–177 (DPNI…YYSI), 199–219 (PIAK…TLIA), 237–257 (LIFV…SVPW), and 258–278 (AIFH…LTIV).

Belongs to the ATPase A chain family. F-type ATPases have 2 components, CF(1) - the catalytic core - and CF(0) - the membrane proton channel. CF(1) has five subunits: alpha(3), beta(3), gamma(1), delta(1), epsilon(1). CF(0) has three main subunits: a(1), b(2) and c(9-12). The alpha and beta chains form an alternating ring which encloses part of the gamma chain. CF(1) is attached to CF(0) by a central stalk formed by the gamma and epsilon chains, while a peripheral stalk is formed by the delta and b chains.

It localises to the cell inner membrane. Functionally, key component of the proton channel; it plays a direct role in the translocation of protons across the membrane. The protein is ATP synthase subunit a of Psychrobacter sp. (strain PRwf-1).